Reading from the N-terminus, the 522-residue chain is Glutamate--cysteine ligase, chloroplastic (522 aa).

Residues 1 to 45 (MALMSQAGSSHCIYSEKMKCISGHSSITSNMEMLKMKDICFGNIS) constitute a chloroplast transit peptide. Cys186 and Cys406 are joined by a disulfide.

The protein belongs to the carboxylate-amine ligase family. Glutamate--cysteine ligase type 2 subfamily. Homodimer or monomer when oxidized or reduced, respectively. Post-translationally, the Cys-186-Cys-406 disulfide bridge is known to modulate the enzyme activity according to the redox status. The oxidized form constitutes the active enzyme.

The protein resides in the plastid. The protein localises to the chloroplast. The enzyme catalyses L-cysteine + L-glutamate + ATP = gamma-L-glutamyl-L-cysteine + ADP + phosphate + H(+). The protein operates within sulfur metabolism; glutathione biosynthesis; glutathione from L-cysteine and L-glutamate: step 1/2. The sequence is that of Glutamate--cysteine ligase, chloroplastic (GSH1) from Nicotiana tabacum (Common tobacco).